The primary structure comprises 125 residues: KESSAEKFLRQHVDSIDSPGNLSPTYCNQMMLRRNMTKGSCKPVNTFVHEPLKDIKAVCFQENVTCKNGNSNCYKSHASLHITDCRTISSSKYPDCAYKTSQEQKHIIVACEGDPFVPVHYDASV.

2 residues coordinate substrate: lysine 7 and arginine 10. Histidine 12 (proton acceptor) is an active-site residue. Intrachain disulfides connect cysteine 27–cysteine 85, cysteine 41–cysteine 96, cysteine 59–cysteine 111, and cysteine 66–cysteine 73. Asparagine 35 is a glycosylation site (N-linked (GlcNAc...) asparagine). Residues 42–46 (KPVNT), lysine 67, and arginine 86 each bind substrate. The active-site Proton donor is the histidine 120.

It belongs to the pancreatic ribonuclease family. Monomer. Interacts with and forms tight 1:1 complexes with RNH1. Dimerization of two such complexes may occur. Interaction with RNH1 inhibits this protein. As to expression, pancreas.

It is found in the secreted. It carries out the reaction an [RNA] containing cytidine + H2O = an [RNA]-3'-cytidine-3'-phosphate + a 5'-hydroxy-ribonucleotide-3'-[RNA].. The enzyme catalyses an [RNA] containing uridine + H2O = an [RNA]-3'-uridine-3'-phosphate + a 5'-hydroxy-ribonucleotide-3'-[RNA].. Its function is as follows. Endonuclease that catalyzes the cleavage of RNA on the 3' side of pyrimidine nucleotides. Acts on single-stranded and double-stranded RNA. In Spalax ehrenbergi (Middle East blind mole rat), this protein is Ribonuclease pancreatic (RNASE1).